Here is a 288-residue protein sequence, read N- to C-terminus: MLVNIKQMLQHAKQHHYAVPHININNYEWAKAVLTAAQQAKSPIIVSTSEGALKYISGHQVVVPMVKGLVDALKITVPVALHLDHGSYEGCKAALQAGFSSIMFDGSHLPFQENFTKSKELIELAKQTNASVELEVGTLGGEEDGIVGQGELANIEECKQIATLKPDALAAGIGNIHGLYPDNWKGLNYELIEAIAKATNLPLVLHGGSGIPEADVKKAIGLGISKLNINTECQLAFAKAIREYVEAKKDLDTHNKGYDPRKLLKSPTQAIVDCCLEKMQLCGSTNKA.

S49 serves as a coordination point for D-glyceraldehyde 3-phosphate. D84 functions as the Proton donor in the catalytic mechanism. Zn(2+) contacts are provided by H85, D105, E135, and H177. G178 serves as a coordination point for dihydroxyacetone phosphate. Position 206 (H206) interacts with Zn(2+). Residues 207–209 and 228–231 contribute to the dihydroxyacetone phosphate site; these read GGS and NINT.

It belongs to the class II fructose-bisphosphate aldolase family. In terms of assembly, homodimer. Zn(2+) serves as cofactor.

It catalyses the reaction beta-D-fructose 1,6-bisphosphate = D-glyceraldehyde 3-phosphate + dihydroxyacetone phosphate. The protein operates within carbohydrate degradation; glycolysis; D-glyceraldehyde 3-phosphate and glycerone phosphate from D-glucose: step 4/4. Catalyzes the aldol condensation of dihydroxyacetone phosphate (DHAP or glycerone-phosphate) with glyceraldehyde 3-phosphate (G3P) to form fructose 1,6-bisphosphate (FBP) in gluconeogenesis and the reverse reaction in glycolysis. In Mycoplasma pneumoniae (strain ATCC 29342 / M129 / Subtype 1) (Mycoplasmoides pneumoniae), this protein is Fructose-bisphosphate aldolase (fba).